A 367-amino-acid chain; its full sequence is D-alanine--D-alanine ligase (367 aa).

The 207-residue stretch at 145-351 (KRLLRDAGLP…QPALMDELVA (207 aa)) folds into the ATP-grasp domain. Residue 174 to 229 (RAVGSSELFVKPANLGSSVGISKTRDAAEFEAACQLALRFDRKILIERCIAPVREI) coordinates ATP. Residues aspartate 306, glutamate 318, and asparagine 320 each contribute to the Mg(2+) site.

The protein belongs to the D-alanine--D-alanine ligase family. Mg(2+) is required as a cofactor. Mn(2+) serves as cofactor.

Its subcellular location is the cytoplasm. The catalysed reaction is 2 D-alanine + ATP = D-alanyl-D-alanine + ADP + phosphate + H(+). Its pathway is cell wall biogenesis; peptidoglycan biosynthesis. In terms of biological role, cell wall formation. This is D-alanine--D-alanine ligase from Bradyrhizobium sp. (strain ORS 278).